A 130-amino-acid chain; its full sequence is Small ribosomal subunit protein uS8 (130 aa).

This sequence belongs to the universal ribosomal protein uS8 family. In terms of assembly, part of the 30S ribosomal subunit. Contacts proteins S5 and S12.

Its function is as follows. One of the primary rRNA binding proteins, it binds directly to 16S rRNA central domain where it helps coordinate assembly of the platform of the 30S subunit. The chain is Small ribosomal subunit protein uS8 from Pseudomonas syringae pv. tomato (strain ATCC BAA-871 / DC3000).